The following is a 268-amino-acid chain: Zygote formation protein zyg1 (268 aa).

In terms of biological role, plays an essential role in zygote formation by inducing sexual cell fusion. Overexpressing cells eventually formed many loose mounds, in which giant multinucleate cells were surrounded by normal-sized cells. The protein is Zygote formation protein zyg1 (zyg1) of Dictyostelium mucoroides (Slime mold).